Consider the following 139-residue polypeptide: Ribulose bisphosphate carboxylase small subunit (139 aa).

This sequence belongs to the RuBisCO small chain family. As to quaternary structure, heterohexadecamer of 8 large and 8 small subunits.

The protein localises to the plastid. Its subcellular location is the chloroplast. Functionally, ruBisCO catalyzes two reactions: the carboxylation of D-ribulose 1,5-bisphosphate, the primary event in carbon dioxide fixation, as well as the oxidative fragmentation of the pentose substrate in the photorespiration process. Both reactions occur simultaneously and in competition at the same active site. Although the small subunit is not catalytic it is essential for maximal activity. This is Ribulose bisphosphate carboxylase small subunit from Thalassiosira nordenskioeldii (Marine diatom).